The following is a 459-amino-acid chain: Cyclooctatin synthase (459 aa).

Cys408 lines the heme pocket.

This sequence belongs to the cytochrome P450 family. Requires heme as cofactor.

It carries out the reaction cyclooctat-9-ene-5,7-diol + AH2 + O2 = cyclooctatin + A + H2O. Its function is as follows. Involved in the biosynthesis of cyclooctatin, a potent inhibitor of lysophospholipase. Catalyzes the hydroxylation of cyclooctat-9-ene-5,7-diol at C-18 to yield the final product, cyclooctatin. The polypeptide is Cyclooctatin synthase (Streptomyces melanosporofaciens).